A 338-amino-acid chain; its full sequence is Short-chain dehydrogenase/reductase phmF (338 aa).

NADP(+)-binding residues include Leu-46, Arg-71, Asp-96, and Asn-123. Ser-177 acts as the Proton donor in catalysis. Tyr-211 and Lys-215 together coordinate NADP(+). Tyr-211 functions as the Proton acceptor in the catalytic mechanism. The active-site Lowers pKa of active site Tyr is Lys-215.

The protein belongs to the short-chain dehydrogenases/reductases (SDR) family.

It participates in mycotoxin biosynthesis. Its function is as follows. Short-chain dehydrogenase/reductase; part of the gene cluster that mediates the biosynthesis of the mycotoxins phomacins, leucine-derived cytochalasans with potent actin polymerization-inhibitory activities and monocot-specific antigerminative activities. The first step in the pathway is catalyzed by the hybrid PKS-NRPS phmA, assisted by the enoyl reductase phmE, that are responsible for fusion of the leucine precursor and the polyketide backbone to produce a 2-pyrrolidone intermediate. The polyketide synthase module (PKS) of phmA is responsible for the synthesis of the polyketide backbone and the downstream nonribosomal peptide synthetase (NRPS) amidates the carboxyl end of the polyketide with the leucine precursor. Because phmA lacks a designated enoylreductase (ER) domain, the required activity is provided the enoyl reductase phmE. Reduction by the hydrolyase phmG, followed by dehydration and intra-molecular Diels-Alder cyclization by the Diels-Alderase phmD then yield the required isoindolone-fused macrocycle. A number of oxidative steps catalyzed by the tailoring cytochrome P450 monooxygenase phmB, the FAD-linked oxidoreductase phmC and the short-chain dehydrogenase/reductase phmF, are further required to afford the final products, phomacin D and phomacin E. This Phaeosphaeria nodorum (strain SN15 / ATCC MYA-4574 / FGSC 10173) (Glume blotch fungus) protein is Short-chain dehydrogenase/reductase phmF.